Here is a 385-residue protein sequence, read N- to C-terminus: S-adenosylmethionine synthase (385 aa).

His15 provides a ligand contact to ATP. Residue Asp17 participates in Mg(2+) binding. K(+) is bound at residue Glu43. L-methionine contacts are provided by Glu56 and Gln99. Residues Gln99 to Arg109 form a flexible loop region. Residues Asp164–Lys166, Arg230–Phe231, Asp239, Arg245–Lys246, Ala262, and Lys266 contribute to the ATP site. Asp239 is an L-methionine binding site. Lys270 is an L-methionine binding site.

This sequence belongs to the AdoMet synthase family. As to quaternary structure, homotetramer; dimer of dimers. Mg(2+) is required as a cofactor. The cofactor is K(+).

It is found in the cytoplasm. The catalysed reaction is L-methionine + ATP + H2O = S-adenosyl-L-methionine + phosphate + diphosphate. It functions in the pathway amino-acid biosynthesis; S-adenosyl-L-methionine biosynthesis; S-adenosyl-L-methionine from L-methionine: step 1/1. In terms of biological role, catalyzes the formation of S-adenosylmethionine (AdoMet) from methionine and ATP. The overall synthetic reaction is composed of two sequential steps, AdoMet formation and the subsequent tripolyphosphate hydrolysis which occurs prior to release of AdoMet from the enzyme. The polypeptide is S-adenosylmethionine synthase (Hamiltonella defensa subsp. Acyrthosiphon pisum (strain 5AT)).